Reading from the N-terminus, the 222-residue chain is GTP cyclohydrolase 1 (222 aa).

Positions 111, 114, and 182 each coordinate Zn(2+).

This sequence belongs to the GTP cyclohydrolase I family. Toroid-shaped homodecamer, composed of two pentamers of five dimers.

The catalysed reaction is GTP + H2O = 7,8-dihydroneopterin 3'-triphosphate + formate + H(+). It functions in the pathway cofactor biosynthesis; 7,8-dihydroneopterin triphosphate biosynthesis; 7,8-dihydroneopterin triphosphate from GTP: step 1/1. In Citrobacter koseri (strain ATCC BAA-895 / CDC 4225-83 / SGSC4696), this protein is GTP cyclohydrolase 1.